A 402-amino-acid polypeptide reads, in one-letter code: MKRFLKAWRKTSLIKKITIGVVIGLFLGILVPKASAIGLLGQLFVGGLKAIAPLLVFTLVISALSQHREGGKTNMSTIIGLYITATFAAALIAVVVNYIFPLTLILKTPAKTDLLPPKGISEVFQSLLLKIVDNPIHAITEANYMSILFWAVIFGLAMRSSNQRTKDLMQTFADATSQVVKWIINLAPIGIMGLVFTSISENGIAILGDYGLLILVLVGTMLFVALVVNPIIAFVMMRKNPYPLVLRCLKDSGITAFFTRSSAANIPVNMRLCEDLGLDKDTYSVSIPLGAAINMAGAAITINILTLAAVNTLGITVDFPTAFLLSVVAAVSACGASGVTGGSLLLIPVACSLFGISNDVAMQVVGVGFIVGVIQDSCETALNSSTDVLFTAVAEKSVFGKK.

The next 9 membrane-spanning stretches (helical) occupy residues 19–39, 43–63, 86–106, 138–158, 179–199, 212–232, 287–307, 327–347, and 354–374; these read IGVV…AIGL, LFVG…VISA, TFAA…TLIL, AITE…GLAM, VVKW…FTSI, LLIL…NPII, IPLG…ILTL, VVAA…LLLI, and FGIS…VGVI.

The protein belongs to the dicarboxylate/amino acid:cation symporter (DAACS) (TC 2.A.23) family.

The protein localises to the cell membrane. It catalyses the reaction L-serine(in) + Na(+)(in) = L-serine(out) + Na(+)(out). The enzyme catalyses L-threonine(in) + Na(+)(in) = L-threonine(out) + Na(+)(out). In terms of biological role, involved in the import of serine and threonine into the cell, with the concomitant import of sodium (symport system). The sequence is that of Serine/threonine transporter SstT from Streptococcus agalactiae serotype III (strain NEM316).